The chain runs to 382 residues: Flap endonuclease 1-A (382 aa).

Residues 1–104 (MGIHGLAKLI…GELAKRSERR (104 aa)) are N-domain. Residue D34 participates in Mg(2+) binding. Residues R47 and R70 each contribute to the DNA site. 5 residues coordinate Mg(2+): D86, E158, E160, D179, and D181. Positions 122 to 253 (NIEKFTKRLV…KRAIDLIRQH (132 aa)) are I-domain. Residue E158 participates in DNA binding. DNA is bound by residues G231 and D233. D233 is a Mg(2+) binding site. An interaction with PCNA region spans residues 336-344 (TQGRLDDFF). Residues 350–382 (VSSTKRKEAESKGSAKKKAKTGGTPAGKFKRGK) form a disordered region.

It belongs to the XPG/RAD2 endonuclease family. FEN1 subfamily. Interacts with PCNA. Three molecules of fen1 bind to one PCNA trimer with each molecule binding to one PCNA monomer. PCNA stimulates the nuclease activity without altering cleavage specificity. The cofactor is Mg(2+). Phosphorylated. Phosphorylation upon DNA damage induces relocalization to the nuclear plasma.

It localises to the nucleus. Its subcellular location is the nucleolus. The protein localises to the nucleoplasm. The protein resides in the mitochondrion. Functionally, structure-specific nuclease with 5'-flap endonuclease and 5'-3' exonuclease activities involved in DNA replication and repair. During DNA replication, cleaves the 5'-overhanging flap structure that is generated by displacement synthesis when DNA polymerase encounters the 5'-end of a downstream Okazaki fragment. It enters the flap from the 5'-end and then tracks to cleave the flap base, leaving a nick for ligation. Also involved in the long patch base excision repair (LP-BER) pathway, by cleaving within the apurinic/apyrimidinic (AP) site-terminated flap. Acts as a genome stabilization factor that prevents flaps from equilibrating into structures that lead to duplications and deletions. Also possesses 5'-3' exonuclease activity on nicked or gapped double-stranded DNA, and exhibits RNase H activity. Also involved in replication and repair of rDNA and in repairing mitochondrial DNA. This Xenopus laevis (African clawed frog) protein is Flap endonuclease 1-A (fen1-a).